We begin with the raw amino-acid sequence, 993 residues long: Ephrin type-B receptor 3 (993 aa).

Residues Met-1 to Ala-29 form the signal peptide. At Leu-30–Leu-554 the chain is on the extracellular side. The Eph LBD domain occupies Glu-31–Ala-209. Cys-73 and Cys-191 are disulfide-bonded. 2 Fibronectin type-III domains span residues Val-331 to Ala-446 and Ala-447 to Glu-540. Asn-343 and Asn-440 each carry an N-linked (GlcNAc...) asparagine glycan. The chain crosses the membrane as a helical span at residues Ile-555–Val-575. The Cytoplasmic portion of the chain corresponds to Cys-576–Val-993. Phosphotyrosine; by autocatalysis is present on Tyr-609. A Protein kinase domain is found at Val-628–Ile-891. ATP contacts are provided by residues Ile-634–Val-642 and Lys-660. Asp-753 functions as the Proton acceptor in the catalytic mechanism. The SAM domain occupies Thr-920–Gln-984. The short motif at Val-991 to Val-993 is the PDZ-binding element.

It belongs to the protein kinase superfamily. Tyr protein kinase family. Ephrin receptor subfamily. As to quaternary structure, heterotetramer upon binding of the ligand. The heterotetramer is composed of an ephrin dimer and a receptor dimer. Oligomerization is probably required to induce biological responses. Post-translationally, phosphorylated. Autophosphorylates upon ligand-binding. Autophosphorylation on Tyr-609 is required for interaction with SH2 domain-containing proteins. Ubiquitinated by RNF186, mainly through 'Lys-48' and 'Lys-63'-linked polyubiquitin chains. In terms of tissue distribution, expressed in cells of the retinal ganglion cell layer during retinal axon guidance to the optic disk. Expressed by Paneth and progenitor cells in the crypts of the intestinal epithelium (at protein level). Expressed in myogenic progenitor cells.

It is found in the cell membrane. The protein localises to the cell projection. Its subcellular location is the dendrite. It catalyses the reaction L-tyrosyl-[protein] + ATP = O-phospho-L-tyrosyl-[protein] + ADP + H(+). Its function is as follows. Receptor tyrosine kinase which binds promiscuously transmembrane ephrin-B family ligands residing on adjacent cells, leading to contact-dependent bidirectional signaling into neighboring cells. The signaling pathway downstream of the receptor is referred to as forward signaling while the signaling pathway downstream of the ephrin ligand is referred to as reverse signaling. Generally has an overlapping and redundant function with EPHB2. Like EPHB2, functions in axon guidance during development regulating for instance the neurons forming the corpus callosum and the anterior commissure, 2 major interhemispheric connections between the temporal lobes of the cerebral cortex. In addition to its role in axon guidance also plays an important redundant role with other ephrin-B receptors in development and maturation of dendritic spines and the formation of excitatory synapses. Controls other aspects of development through regulation of cell migration and positioning. This includes angiogenesis, palate development and thymic epithelium development for instance. Forward and reverse signaling through the EFNB2/EPHB3 complex also regulate migration and adhesion of cells that tubularize the urethra and septate the cloaca. Finally, plays an important role in intestinal epithelium differentiation segregating progenitor from differentiated cells in the crypt. In Mus musculus (Mouse), this protein is Ephrin type-B receptor 3 (Ephb3).